A 1409-amino-acid polypeptide reads, in one-letter code: DNA-directed RNA polymerase subunit beta' (1409 aa).

Cys-70, Cys-72, Cys-85, and Cys-88 together coordinate Zn(2+). Residues Asp-461, Asp-463, and Asp-465 each coordinate Mg(2+). The Zn(2+) site is built by Cys-833, Cys-907, Cys-914, and Cys-917. The segment at 1389–1409 is disordered; that stretch reads EPVAQAAESEDVPDVSQQEAA.

This sequence belongs to the RNA polymerase beta' chain family. The RNAP catalytic core consists of 2 alpha, 1 beta, 1 beta' and 1 omega subunit. When a sigma factor is associated with the core the holoenzyme is formed, which can initiate transcription. Mg(2+) serves as cofactor. The cofactor is Zn(2+).

It carries out the reaction RNA(n) + a ribonucleoside 5'-triphosphate = RNA(n+1) + diphosphate. DNA-dependent RNA polymerase catalyzes the transcription of DNA into RNA using the four ribonucleoside triphosphates as substrates. The polypeptide is DNA-directed RNA polymerase subunit beta' (Pelobacter propionicus (strain DSM 2379 / NBRC 103807 / OttBd1)).